The chain runs to 528 residues: GMP synthase [glutamine-hydrolyzing] (528 aa).

The Glutamine amidotransferase type-1 domain maps to Ser-13–Asp-204. Catalysis depends on Cys-90, which acts as the Nucleophile. Active-site residues include His-178 and Glu-180. Residues Trp-205–Arg-403 form the GMPS ATP-PPase domain. Ser-232 to Ser-238 provides a ligand contact to ATP.

Homodimer.

It catalyses the reaction XMP + L-glutamine + ATP + H2O = GMP + L-glutamate + AMP + diphosphate + 2 H(+). The protein operates within purine metabolism; GMP biosynthesis; GMP from XMP (L-Gln route): step 1/1. Its function is as follows. Catalyzes the synthesis of GMP from XMP. This Prochlorococcus marinus subsp. pastoris (strain CCMP1986 / NIES-2087 / MED4) protein is GMP synthase [glutamine-hydrolyzing].